The primary structure comprises 590 residues: Beta-(1--&gt;2)glucan export ATP-binding/permease protein NdvA (590 aa).

The region spanning 21–301 (VALICGANVA…MSAFANQISE (281 aa)) is the ABC transmembrane type-1 domain. The next 6 membrane-spanning stretches (helical) occupy residues 22 to 42 (ALIC…PIMF), 55 to 75 (VFST…AFVL), 136 to 156 (QHLS…SMDV), 158 to 178 (MSMV…LVMK), 248 to 268 (LSST…VTHG), and 275 to 295 (VIAF…MSAF). An ABC transporter domain is found at 335 to 569 (VRFEDVGFEF…NGRFASLLRA (235 aa)). 368–375 (GPTGAGKT) lines the ATP pocket.

It belongs to the ABC transporter superfamily. Beta-(1--&gt;2)glucan exporter (TC 3.A.1.108.1) family. Homodimer.

The protein resides in the cell inner membrane. The enzyme catalyses [(1-&gt;2)-beta-D-glucosyl](n)(in) + ATP + H2O = [(1-&gt;2)-beta-D-glucosyl](n)(out) + ADP + phosphate + H(+). Involved in beta-(1--&gt;2)glucan export. Transmembrane domains (TMD) form a pore in the inner membrane and the ATP-binding domain (NBD) is responsible for energy generation. This Mesorhizobium japonicum (strain LMG 29417 / CECT 9101 / MAFF 303099) (Mesorhizobium loti (strain MAFF 303099)) protein is Beta-(1--&gt;2)glucan export ATP-binding/permease protein NdvA.